The chain runs to 576 residues: Sodium/proton antiporter 1 (576 aa).

The N-terminal 60 residues, 1–60 (MAVFPIGSHFAPPHQLTKRHVIATSSPISISTRLPQNVSFSKVSGVTGSTRLSKHGVLVR), are a transit peptide targeting the chloroplast. The next 9 membrane-spanning stretches (helical) occupy residues 237-257 (TLLW…DNLT), 279-299 (LGGV…IGDV), 320-340 (FLPS…TSEV), 357-377 (APRG…VPVF), 379-399 (ALTG…LWIL), 426-446 (GALF…AGIL), 462-482 (LIAS…LVAA), 501-521 (LIAF…AAGV), and 541-561 (FAFA…NLHF).

This sequence belongs to the NhaD Na(+)/H(+) (TC 2.A.62) antiporter family. As to expression, mostly expressed in mature and senescent leaves, and, to a lower extent, in seeds, roots, shoots, flowers and developing siliques.

Its subcellular location is the plastid. It is found in the chloroplast membrane. The protein localises to the chloroplast envelope. Its function is as follows. Na(+)/H(+) antiporter that extrudes sodium in exchange for external protons. This chain is Sodium/proton antiporter 1, found in Arabidopsis thaliana (Mouse-ear cress).